Reading from the N-terminus, the 128-residue chain is Entry-fusion complex protein OPG094 (128 aa).

The Intravirion segment spans residues 1 to 30 (MENVPNVYFNPVFIEPTFKHSLLSVYKHRL). Residues 31–51 (IVLFEVFVVFILIYVFFRSEL) traverse the membrane as a helical; Signal-anchor for type III membrane protein segment. At 52-107 (NMFFMHKRKIPDPIDRLRRANLACEDDKLMIYGLPWITTQTSALSINSKPIVYKDC) the chain is on the virion surface side. An intrachain disulfide couples cysteine 75 to cysteine 107.

Belongs to the orthopoxvirus OPG099 family. Interacts with OPG086. Component of the entry fusion complex (EFC) composed of OPG053, OPG076, OPG086, OPG094, OPG095, OPG099, OPG107, OPG143, OPG104J5, OPG147 and OPG155. Except for OPG095 and OPG053, each of the EFC proteins is required for assembly or stability of the complex. Post-translationally, most cysteines are linked by disulfide bonds. They are created by the viral disulfide bond formation pathway, a poxvirus-specific redox pathway that operates on the cytoplasmic side of the MV membranes. Unglycosylated because produced in viral factories instead of the classic ER -Golgi route.

It is found in the virion membrane. Component of the entry fusion complex (EFC), which consists of 11 proteins. During cell infection, this complex mediates entry of the virion core into the host cytoplasm by a two-step mechanism consisting of lipid mixing of the viral and cellular membranes and subsequent pore formation. This chain is Entry-fusion complex protein OPG094 (OPG099), found in Homo sapiens (Human).